The sequence spans 243 residues: Vimentin A2 (243 aa).

The tract at residues 1–22 is coil 1B; the sequence is GFSLQDELDFLKKLHDEELADV. One can recognise an IF rod domain in the interval 1–188; sequence GFSLQDELDF…KLLEGEESRI (188 aa). The interval 23-45 is linker 12; sequence QAQIQDQQVQVDMDMAKPDLTAA. The segment at 46–184 is coil 2; that stretch reads LRDVRLQYEN…ATYRKLLEGE (139 aa). The tract at residues 185-243 is tail; that stretch reads ESRITTPLPNLSSFNLRDAILETKPILENTFSKKVLIKTIETRDGEVINESTQNHDDLE.

The protein belongs to the intermediate filament family. Homomer. In terms of processing, one of the most prominent phosphoproteins in various cells of mesenchymal origin. Phosphorylation is enhanced during cell division, at which time vimentin filaments are significantly reorganized. Expressed in low amounts in retina, optic nerve, and brain and in higher amounts in spinal cord.

Vimentins are class-III intermediate filaments found in various non-epithelial cells, especially mesenchymal cells. Vimentin is attached to the nucleus, endoplasmic reticulum, and mitochondria, either laterally or terminally. This is Vimentin A2 from Carassius auratus (Goldfish).